The following is a 351-amino-acid chain: 2-Hydroxyacid oxidase 2 (351 aa).

The FMN hydroxy acid dehydrogenase domain maps to 2–351 (SLVCLTDFQA…NRNLVQFSRL (350 aa)). Residues 77–79 (PTG), Ser-106, and Gln-128 each bind FMN. A 2-oxocarboxylate is bound at residue Tyr-130. Thr-156 lines the FMN pocket. Arg-165 contacts a 2-oxocarboxylate. Thr-178 carries the post-translational modification Phosphothreonine. Lys-222 contacts FMN. His-246 acts as the Proton acceptor in catalysis. Arg-249 contributes to the a 2-oxocarboxylate binding site. Residues 277–281 (DGGVR) and 300–301 (GR) each bind FMN. The short motif at 349–351 (SRL) is the Microbody targeting signal element.

Belongs to the FMN-dependent alpha-hydroxy acid dehydrogenase family. In terms of assembly, homotetramer. It depends on FMN as a cofactor. As to expression, expressed in the liver and kidney.

The protein resides in the peroxisome. It catalyses the reaction a (2S)-2-hydroxycarboxylate + O2 = a 2-oxocarboxylate + H2O2. The catalysed reaction is 2-hydroxyhexadecanoate + O2 = 2-oxohexadecanoate + H2O2. It carries out the reaction 2-hydroxyoctanoate + O2 = 2-oxooctanoate + H2O2. The protein operates within lipid metabolism; fatty acid metabolism. Oxidase that catalyzes the oxidation of medium and long chain hydroxyacids such as 2-hydroxyhexadecanoate and 2-hydroxyoctanoate, to the correspondong 2-oxoacids. Its role in the oxidation of 2-hydroxy fatty acids may contribute to the general pathway of fatty acid alpha-oxidation. Active in vitro with the artificial electron acceptor 2,6-dichlorophenolindophenol (DCIP), but O2 is believed to be the physiological electron acceptor, leading to the production of H2O2. Is not active on glycolate, glyoxylate, L-lactate and 2-hydroxybutanoate. The chain is 2-Hydroxyacid oxidase 2 (HAO2) from Homo sapiens (Human).